The chain runs to 360 residues: Phospho-N-acetylmuramoyl-pentapeptide-transferase (360 aa).

The next 10 helical transmembrane spans lie at 25 to 45 (RTIY…PWLI), 73 to 93 (TMGG…WADL), 94 to 114 (TNAY…IGFV), 134 to 154 (FCLQ…GLNG), 173 to 193 (PGYV…VNLT), 198 to 218 (GLAI…AYVA), 240 to 260 (VFCG…AYPA), 262 to 282 (IFMG…VAIL), 287 to 307 (LALV…ILQV), and 337 to 357 (KVIV…VSTL).

This sequence belongs to the glycosyltransferase 4 family. MraY subfamily. Requires Mg(2+) as cofactor.

The protein resides in the cell inner membrane. The enzyme catalyses UDP-N-acetyl-alpha-D-muramoyl-L-alanyl-gamma-D-glutamyl-meso-2,6-diaminopimeloyl-D-alanyl-D-alanine + di-trans,octa-cis-undecaprenyl phosphate = di-trans,octa-cis-undecaprenyl diphospho-N-acetyl-alpha-D-muramoyl-L-alanyl-D-glutamyl-meso-2,6-diaminopimeloyl-D-alanyl-D-alanine + UMP. The protein operates within cell wall biogenesis; peptidoglycan biosynthesis. Functionally, catalyzes the initial step of the lipid cycle reactions in the biosynthesis of the cell wall peptidoglycan: transfers peptidoglycan precursor phospho-MurNAc-pentapeptide from UDP-MurNAc-pentapeptide onto the lipid carrier undecaprenyl phosphate, yielding undecaprenyl-pyrophosphoryl-MurNAc-pentapeptide, known as lipid I. The polypeptide is Phospho-N-acetylmuramoyl-pentapeptide-transferase (Desulfatibacillum aliphaticivorans).